The sequence spans 469 residues: MSFIDSLATLGQYLPAVTKPKEKPSLGQKLVWSLVAVIIYLIMASTPLYGITSASFFKNLILEQIIFASTTGTLAQLGIGPIITAGLIMQILAGSKLISIDLNDPDDRVKFTEAQKGLAFIFILVESALFGYVLARTSTTINASILFIAGIVIAQLIVATYLILLLDELIQKGWGLGSGVSLFILAGVMKIMFWDMFGIASVSSQNLPIGFFPALFTALASHSDVLNLIVNTSTKNLFQPDLVGLVTTIALIIITIYLTTMTIEIPVTSQKLRGIRRTIPLNFLYVSSIPVIFVAVLGSDIQLFASLASYVSPSASNILNTVSGVFFFPPPNSAIPHSIYAVVLDPLGALEYAVVFIVLSILFGILWVDVAGLDPATQAQQLVEAGIEIPGVRNNPKIIEGILARYIYPLAFFSSIIVGLIAVFATLLGAYGTGIGILLAVTIAIQYYSLLAYERSLEMYPLLKRLIGE.

The Cytoplasmic segment spans residues 1–20 (MSFIDSLATLGQYLPAVTKP). Residues 21–47 (KEKPSLGQKLVWSLVAVIIYLIMASTP) traverse the membrane as a helical segment. At 48–59 (LYGITSASFFKN) the chain is on the extracellular side. The segment at residues 60-67 (LILEQIIF) is an intramembrane region (helical). Residues 60–88 (LILEQIIFASTTGTLAQLGIGPIITAGLI) traverse the membrane as a discontinuously helical segment. Residues 68-79 (ASTTGTLAQLGI) lie within the membrane without spanning it. The segment at residues 80–88 (GPIITAGLI) is an intramembrane region (helical). The Cytoplasmic portion of the chain corresponds to 89–109 (MQILAGSKLISIDLNDPDDRV). Residues 110 to 131 (KFTEAQKGLAFIFILVESALFG) traverse the membrane as a helical segment. Over 132-146 (YVLARTSTTINASIL) the chain is Extracellular. A helical membrane pass occupies residues 147–171 (FIAGIVIAQLIVATYLILLLDELIQ). The Cytoplasmic portion of the chain corresponds to 172 to 178 (KGWGLGS). A helical membrane pass occupies residues 179–197 (GVSLFILAGVMKIMFWDMF). At 198-240 (GIASVSSQNLPIGFFPALFTALASHSDVLNLIVNTSTKNLFQP) the chain is on the extracellular side. A helical transmembrane segment spans residues 241–262 (DLVGLVTTIALIIITIYLTTMT). Residues 263 to 287 (IEIPVTSQKLRGIRRTIPLNFLYVS) lie on the Cytoplasmic side of the membrane. The chain crosses the membrane as a helical span at residues 288–309 (SIPVIFVAVLGSDIQLFASLAS). The Extracellular segment spans residues 310 to 347 (YVSPSASNILNTVSGVFFFPPPNSAIPHSIYAVVLDPL). Residues 348-367 (GALEYAVVFIVLSILFGILW) traverse the membrane as a helical segment. The Cytoplasmic portion of the chain corresponds to 368–410 (VDVAGLDPATQAQQLVEAGIEIPGVRNNPKIIEGILARYIYPL). The helical transmembrane segment at 411 to 429 (AFFSSIIVGLIAVFATLLG) threads the bilayer. Residues 430 to 432 (AYG) are Extracellular-facing. A helical transmembrane segment spans residues 433–447 (TGIGILLAVTIAIQY). The Cytoplasmic portion of the chain corresponds to 448–469 (YSLLAYERSLEMYPLLKRLIGE).

This sequence belongs to the SecY/SEC61-alpha family. As to quaternary structure, component of the Sec protein translocase complex. Heterotrimer consisting of alpha (SecY), beta (SecG) and gamma (SecE) subunits. The heterotrimers can form oligomers, although 1 heterotrimer is thought to be able to translocate proteins. Interacts with the ribosome. May interact with SecDF, and other proteins may be involved.

The protein resides in the cell membrane. Functionally, the central subunit of the protein translocation channel SecYEG. Consists of two halves formed by TMs 1-5 and 6-10. These two domains form a lateral gate at the front which open onto the bilayer between TMs 2 and 7, and are clamped together by SecE at the back. The channel is closed by both a pore ring composed of hydrophobic SecY resides and a short helix (helix 2A) on the extracellular side of the membrane which forms a plug. The plug probably moves laterally to allow the channel to open. The ring and the pore may move independently. This chain is Protein translocase subunit SecY, found in Saccharolobus solfataricus (strain ATCC 35092 / DSM 1617 / JCM 11322 / P2) (Sulfolobus solfataricus).